The primary structure comprises 605 residues: Endonuclease 8-like 3 (605 aa).

V2 serves as the catalytic Schiff-base intermediate with DNA; via amino nitrogen. N192 and R271 together coordinate DNA. The FPG-type zinc finger occupies 247–281; the sequence is KVYKRPNCGQCHCRITVCRFGDNNRMTYFCPHCQK. The segment at 317 to 346 adopts a RanBP2-type zinc-finger fold; sequence SEEHWTCVVCTLINKPSSKACDACLTSRPI. Phosphoserine is present on S450. The disordered stretch occupies residues 456–477; that stretch reads ESKLFSPAHKKPKTAQYSSPEL. Zn(2+) is bound by residues C507, H510, C533, C541, C554, H556, C579, and C587. 2 consecutive GRF-type zinc fingers follow at residues 507–550 and 554–596; these read CSKH…ADLS and CNHG…AENG.

It belongs to the FPG family. In terms of tissue distribution, expressed in keratinocytes and embryonic fibroblasts (at protein level). Also detected in thymus, testis and fetal lung primary fibroblasts.

The protein localises to the nucleus. It localises to the chromosome. The enzyme catalyses 2'-deoxyribonucleotide-(2'-deoxyribose 5'-phosphate)-2'-deoxyribonucleotide-DNA = a 3'-end 2'-deoxyribonucleotide-(2,3-dehydro-2,3-deoxyribose 5'-phosphate)-DNA + a 5'-end 5'-phospho-2'-deoxyribonucleoside-DNA + H(+). Functionally, DNA glycosylase which prefers single-stranded DNA (ssDNA), or partially ssDNA structures such as bubble and fork structures, to double-stranded DNA (dsDNA). Mediates interstrand cross-link repair in response to replication stress: acts by mediating DNA glycosylase activity, cleaving one of the two N-glycosyl bonds comprising the interstrand cross-link, which avoids the formation of a double-strand break but generates an abasic site that is bypassed by translesion synthesis polymerases. In vitro, displays strong glycosylase activity towards the hydantoin lesions spiroiminodihydantoin (Sp) and guanidinohydantoin (Gh) in both ssDNA and dsDNA; also recognizes FapyA, FapyG, 5-OHU, 5-OHC, 5-OHMH, Tg and 8-oxoA lesions in ssDNA. No activity on 8-oxoG detected. Also shows weak DNA-(apurinic or apyrimidinic site) lyase activity. In vivo, appears to be the primary enzyme involved in removing Sp and Gh from ssDNA in neonatal tissues. The polypeptide is Endonuclease 8-like 3 (NEIL3) (Homo sapiens (Human)).